The sequence spans 548 residues: Eukaryotic translation initiation factor 3 subunit D (548 aa).

K53 bears the N6-acetyllysine mark. Residue S161 is modified to Phosphoserine. An RNA gate region spans residues D285–P299. Positions P523 to T548 are disordered. A phosphoserine mark is found at S528 and S529. A compositionally biased stretch (acidic residues) spans S529–T548.

The protein belongs to the eIF-3 subunit D family. As to quaternary structure, component of the eukaryotic translation initiation factor 3 (eIF-3) complex, which is composed of 13 subunits: EIF3A, EIF3B, EIF3C, EIF3D, EIF3E, EIF3F, EIF3G, EIF3H, EIF3I, EIF3J, EIF3K, EIF3L and EIF3M. The eIF-3 complex appears to include 3 stable modules: module A is composed of EIF3A, EIF3B, EIF3G and EIF3I; module B is composed of EIF3F, EIF3H, and EIF3M; and module C is composed of EIF3C, EIF3D, EIF3E, EIF3K and EIF3L. EIF3C of module C binds EIF3B of module A and EIF3H of module B, thereby linking the three modules. EIF3J is a labile subunit that binds to the eIF-3 complex via EIF3B. The eIF-3 complex interacts with RPS6KB1 under conditions of nutrient depletion. Mitogenic stimulation leads to binding and activation of a complex composed of MTOR and RPTOR, leading to phosphorylation and release of RPS6KB1 and binding of EIF4B to eIF-3.

The protein resides in the cytoplasm. Its function is as follows. mRNA cap-binding component of the eukaryotic translation initiation factor 3 (eIF-3) complex, a complex required for several steps in the initiation of protein synthesis of a specialized repertoire of mRNAs. The eIF-3 complex associates with the 40S ribosome and facilitates the recruitment of eIF-1, eIF-1A, eIF-2:GTP:methionyl-tRNAi and eIF-5 to form the 43S pre-initiation complex (43S PIC). The eIF-3 complex stimulates mRNA recruitment to the 43S PIC and scanning of the mRNA for AUG recognition. The eIF-3 complex is also required for disassembly and recycling of post-termination ribosomal complexes and subsequently prevents premature joining of the 40S and 60S ribosomal subunits prior to initiation. The eIF-3 complex specifically targets and initiates translation of a subset of mRNAs involved in cell proliferation, including cell cycling, differentiation and apoptosis, and uses different modes of RNA stem-loop binding to exert either translational activation or repression. In the eIF-3 complex, EIF3D specifically recognizes and binds the 7-methylguanosine cap of a subset of mRNAs. This is Eukaryotic translation initiation factor 3 subunit D from Macaca fascicularis (Crab-eating macaque).